Consider the following 45-residue polypeptide: Phospholipase A2 3 (45 aa).

Tyrosine 20, glycine 24, and glycine 25 together coordinate Ca(2+). A disulfide bond links cysteine 21 and cysteine 36. Histidine 39 is an active-site residue. Aspartate 40 is a binding site for Ca(2+).

Requires Ca(2+) as cofactor. In terms of tissue distribution, expressed by the venom gland.

The protein localises to the secreted. It catalyses the reaction a 1,2-diacyl-sn-glycero-3-phosphocholine + H2O = a 1-acyl-sn-glycero-3-phosphocholine + a fatty acid + H(+). Its function is as follows. PLA2 catalyzes the calcium-dependent hydrolysis of the 2-acyl groups in 3-sn-phosphoglycerides. The sequence is that of Phospholipase A2 3 from Bothrops diporus (Chaco lancehead).